The following is an 85-amino-acid chain: uncharacterized protein (85 aa).

This is an uncharacterized protein from Fowlpox virus (strain NVSL) (FPV).